The following is a 359-amino-acid chain: Protein trichome birefringence-like 42 (359 aa).

The chain crosses the membrane as a helical; Signal-anchor for type II membrane protein span at residues Leu-7 to Ala-25. The short motif at Gly-110 to Ser-112 is the GDS motif element. Positions Asp-335–Asn-349 match the DCXHWCLPGXXDXWN motif motif.

The protein belongs to the PC-esterase family. TBL subfamily.

It is found in the membrane. In terms of biological role, may act as a bridging protein that binds pectin and other cell wall polysaccharides. Probably involved in maintaining esterification of pectins. May be involved in the specific O-acetylation of cell wall polymers. The chain is Protein trichome birefringence-like 42 (TBL42) from Arabidopsis thaliana (Mouse-ear cress).